The primary structure comprises 439 residues: Trigger factor (439 aa).

One can recognise a PPIase FKBP-type domain in the interval 175-260 (GDRVTISYRS…VERLSVKDEI (86 aa)).

Belongs to the FKBP-type PPIase family. Tig subfamily.

The protein resides in the cytoplasm. The catalysed reaction is [protein]-peptidylproline (omega=180) = [protein]-peptidylproline (omega=0). Functionally, involved in protein export. Acts as a chaperone by maintaining the newly synthesized protein in an open conformation. Functions as a peptidyl-prolyl cis-trans isomerase. This Anaplasma phagocytophilum (strain HZ) protein is Trigger factor.